The primary structure comprises 294 residues: 4-hydroxy-tetrahydrodipicolinate synthase (294 aa).

T45 is a binding site for pyruvate. Y133 (proton donor/acceptor) is an active-site residue. K162 acts as the Schiff-base intermediate with substrate in catalysis. I204 contributes to the pyruvate binding site.

This sequence belongs to the DapA family. In terms of assembly, homotetramer; dimer of dimers.

Its subcellular location is the cytoplasm. The enzyme catalyses L-aspartate 4-semialdehyde + pyruvate = (2S,4S)-4-hydroxy-2,3,4,5-tetrahydrodipicolinate + H2O + H(+). Its pathway is amino-acid biosynthesis; L-lysine biosynthesis via DAP pathway; (S)-tetrahydrodipicolinate from L-aspartate: step 3/4. In terms of biological role, catalyzes the condensation of (S)-aspartate-beta-semialdehyde [(S)-ASA] and pyruvate to 4-hydroxy-tetrahydrodipicolinate (HTPA). In Bartonella henselae (strain ATCC 49882 / DSM 28221 / CCUG 30454 / Houston 1) (Rochalimaea henselae), this protein is 4-hydroxy-tetrahydrodipicolinate synthase.